We begin with the raw amino-acid sequence, 541 residues long: Zinc finger protein 513 (541 aa).

Residues 1–118 (MPRRKQSHPQ…GEARGERPGP (118 aa)) are disordered. The span at 44–55 (LEFEEEEEEDEG) shows a compositional bias: acidic residues. 2 positions are modified to phosphoserine: S85 and S96. Residues 103–115 (EPARGPGEARGER) show a composition bias toward basic and acidic residues. C2H2-type zinc fingers lie at residues 150-172 (YSCR…MQTH), 178-200 (FRCG…TRTH), 206-228 (YRCP…QRTH), 360-382 (FACS…MKTH), 388-410 (FRCA…QRVH), 416-438 (YKCP…GRIH), 444-466 (FRCS…MLRH), and 472-494 (FRCA…QKVH). The disordered stretch occupies residues 492–541 (KVHGHGGAGGPGLSAPEGWAPPHSPPSVLSTRGPAALGATGSRALHSDSP).

Belongs to the krueppel C2H2-type zinc-finger protein family. As to quaternary structure, binds DNA. Can associate with the proximal promoter regions of PAX6 and SP4, and their known targets including ARR3, RHO, OPN1MW2 and OPN1SW. Widely expressed. In the eye, expression is greatest in the retina and least in the lens and cornea.

Its subcellular location is the nucleus. Functionally, transcriptional regulator that plays a role in retinal development and maintenance. The protein is Zinc finger protein 513 (Znf513) of Mus musculus (Mouse).